Reading from the N-terminus, the 373-residue chain is Pollen allergen KBG 31 (373 aa).

The signal sequence occupies residues 1-28 (MDKANGAYKTALKAASAVAPAEKFPVFQ).

It belongs to the Poa p IX/Phl p VI allergen family. As to expression, pollen.

The polypeptide is Pollen allergen KBG 31 (Poa pratensis (Kentucky bluegrass)).